Consider the following 166-residue polypeptide: uncharacterized protein (166 aa).

Its function is as follows. This protein may be involved in virus assembly. Essential for virus function. This is an uncharacterized protein from Sulfolobus spindle-shape virus 1 (SSV1).